A 394-amino-acid polypeptide reads, in one-letter code: UPF0229 protein RBAM_009260 (394 aa).

This sequence belongs to the UPF0229 family.

This Bacillus velezensis (strain DSM 23117 / BGSC 10A6 / LMG 26770 / FZB42) (Bacillus amyloliquefaciens subsp. plantarum) protein is UPF0229 protein RBAM_009260.